We begin with the raw amino-acid sequence, 184 residues long: Photosynthetic apparatus regulatory protein RegA (184 aa).

One can recognise a Response regulatory domain in the interval 14–128 (SLLLVDDDNA…DITNALLAKG (115 aa)). D63 is modified (4-aspartylphosphate).

In terms of processing, phosphorylated by RegB.

In terms of biological role, member of the two-component regulatory system RegB/RegA. Involved in transactivating anaerobic expression of the photosynthetic apparatus. It is a transcriptional regulator that is responsible for activating expression of the puf, puh, and puc operons in response to a decrease in oxygen tension. In Rhodobacter capsulatus (Rhodopseudomonas capsulata), this protein is Photosynthetic apparatus regulatory protein RegA (regA).